The chain runs to 235 residues: Sugar fermentation stimulation protein homolog (235 aa).

This sequence belongs to the SfsA family.

The chain is Sugar fermentation stimulation protein homolog from Aliivibrio fischeri (strain MJ11) (Vibrio fischeri).